We begin with the raw amino-acid sequence, 247 residues long: Sec-independent protein translocase protein TatC (247 aa).

5 helical membrane-spanning segments follow: residues 21–41 (IILL…KPLI), 71–91 (AFII…WAFV), 109–129 (ITFL…FPFI), 154–174 (FLLQ…VIML), and 195–215 (FCLL…HLMI).

Belongs to the TatC family. In terms of assembly, forms a complex with TatA.

It is found in the cell membrane. Functionally, part of the twin-arginine translocation (Tat) system that transports large folded proteins containing a characteristic twin-arginine motif in their signal peptide across membranes. In Listeria innocua serovar 6a (strain ATCC BAA-680 / CLIP 11262), this protein is Sec-independent protein translocase protein TatC.